Reading from the N-terminus, the 300-residue chain is MTDSIPHIPVLVKESLSLFRDRNPVVFCDVTVGAGGHAEAFLTEFPSIERYDGSDRDLSALALSENRLLPFKDRVRLRHASFEEVDTLTSDGTYDGVLADLGVSSMQLNNLERGFSFQGEDHPLDMRMDTSRGMTASEVLNSLREEEIGEIFRNYGEEPLWRSAAAAVVHFRKKKKILTVKDLKDATSGVFPSYRLRKKIHPLTLIFQALRIYVNQEGAQLKVLLDSAFRWLRPGGRLAVISFCSLDDRPVKWAFREAEARGLGKILTKKVIMPSYEETRMNPRSRSAKLRCFEKSFEDK.

Residues 35–37 (GGH), Asp55, Phe82, Asp100, and Gln107 each bind S-adenosyl-L-methionine.

This sequence belongs to the methyltransferase superfamily. RsmH family.

Its subcellular location is the cytoplasm. It catalyses the reaction cytidine(1402) in 16S rRNA + S-adenosyl-L-methionine = N(4)-methylcytidine(1402) in 16S rRNA + S-adenosyl-L-homocysteine + H(+). Functionally, specifically methylates the N4 position of cytidine in position 1402 (C1402) of 16S rRNA. The polypeptide is Ribosomal RNA small subunit methyltransferase H (Chlamydia trachomatis serovar A (strain ATCC VR-571B / DSM 19440 / HAR-13)).